A 75-amino-acid polypeptide reads, in one-letter code: Ferredoxin-thioredoxin reductase, variable chain (75 aa).

The tract at residues 43–46 is interaction with ferredoxin; that stretch reads QGRP.

Belongs to the ferredoxin thioredoxin reductase alpha subunit family. Heterodimer of subunit A (variable subunit) and subunit B (catalytic subunit). Heterodimeric FTR forms a complex with ferredoxin and thioredoxin.

Variable subunit of the ferredoxin-thioredoxin reductase (FTR), which catalyzes the two-electron reduction of thioredoxins by the electrons provided by reduced ferredoxin. This Synechocystis sp. (strain ATCC 27184 / PCC 6803 / Kazusa) protein is Ferredoxin-thioredoxin reductase, variable chain (ftrV).